We begin with the raw amino-acid sequence, 49 residues long: Osteocalcin (49 aa).

Gln1 bears the Pyrrolidone carboxylic acid mark. The region spanning Gln1–Gly47 is the Gla domain. The residue at position 9 (Pro9) is a 4-hydroxyproline. Ca(2+) contacts are provided by Glu17, Glu21, Glu24, and Asp30. 4-carboxyglutamate occurs at positions 17, 21, and 24. The cysteines at positions 23 and 29 are disulfide-linked.

Belongs to the osteocalcin/matrix Gla protein family. In terms of processing, gamma-carboxyglutamate residues are formed by vitamin K dependent carboxylation by GGCX. These residues are essential for the binding of calcium. Decarboxylation promotes the hormone activity.

Its subcellular location is the secreted. Its function is as follows. The carboxylated form is one of the main organic components of the bone matrix, which constitutes 1-2% of the total bone protein: it acts as a negative regulator of bone formation and is required to limit bone formation without impairing bone resorption or mineralization. The carboxylated form binds strongly to apatite and calcium. The uncarboxylated form acts as a hormone secreted by osteoblasts, which regulates different cellular processes, such as energy metabolism, male fertility and brain development. Regulates of energy metabolism by acting as a hormone favoring pancreatic beta-cell proliferation, insulin secretion and sensitivity and energy expenditure. Uncarboxylated osteocalcin hormone also promotes testosterone production in the testes: acts as a ligand for G protein-coupled receptor GPRC6A at the surface of Leydig cells, initiating a signaling response that promotes the expression of enzymes required for testosterone synthesis in a CREB-dependent manner. Also acts as a regulator of brain development: osteocalcin hormone crosses the blood-brain barrier and acts as a ligand for GPR158 on neurons, initiating a signaling response that prevents neuronal apoptosis in the hippocampus, favors the synthesis of all monoamine neurotransmitters and inhibits that of gamma-aminobutyric acid (GABA). Osteocalcin also crosses the placenta during pregnancy and maternal osteocalcin is required for fetal brain development. In Oryctolagus cuniculus (Rabbit), this protein is Osteocalcin (BGLAP).